We begin with the raw amino-acid sequence, 177 residues long: Peptidyl-prolyl cis-trans isomerase H (177 aa).

At Ala2 the chain carries N-acetylalanine. The PPIase cyclophilin-type domain maps to 14–176; sequence FFDVSIGGQE…LPVVISQCGE (163 aa).

The protein belongs to the cyclophilin-type PPIase family. PPIase H subfamily. In terms of assembly, interacts directly with PRPF4. Part of a heteromeric complex containing PPIH, PRPF3 and PRPF4 that is stable in the absence of RNA. Component of the U4/U6-U5 tri-snRNP complex composed of the U4, U6 and U5 snRNAs and at least PRPF3, PRPF4, PRPF6, PRPF8, PRPF31, SNRNP200, TXNL4A, SNRNP40, DDX23, CD2BP2, PPIH, SNU13, EFTUD2, SART1 and USP39. Heterodimer with PRPF18.

It is found in the nucleus speckle. Its subcellular location is the cytoplasm. It catalyses the reaction [protein]-peptidylproline (omega=180) = [protein]-peptidylproline (omega=0). Inhibited by cyclosporin A. PPIase that catalyzes the cis-trans isomerization of proline imidic peptide bonds in oligopeptides and may therefore assist protein folding. Participates in pre-mRNA splicing. May play a role in the assembly of the U4/U5/U6 tri-snRNP complex, one of the building blocks of the spliceosome. May act as a chaperone. The polypeptide is Peptidyl-prolyl cis-trans isomerase H (PPIH) (Homo sapiens (Human)).